A 205-amino-acid chain; its full sequence is Imidazoleglycerol-phosphate dehydratase (205 aa).

It belongs to the imidazoleglycerol-phosphate dehydratase family.

The enzyme catalyses D-erythro-1-(imidazol-4-yl)glycerol 3-phosphate = 3-(imidazol-4-yl)-2-oxopropyl phosphate + H2O. Its pathway is amino-acid biosynthesis; L-histidine biosynthesis; L-histidine from 5-phospho-alpha-D-ribose 1-diphosphate: step 6/9. The sequence is that of Imidazoleglycerol-phosphate dehydratase (HIS3) from Phaffia rhodozyma (Yeast).